The chain runs to 207 residues: Small ribosomal subunit protein uS4c (207 aa).

One can recognise an S4 RNA-binding domain in the interval 92–153 (MRLDNILFRL…PKTYQSILSK (62 aa)).

It belongs to the universal ribosomal protein uS4 family. In terms of assembly, part of the 30S ribosomal subunit. Contacts protein S5. The interaction surface between S4 and S5 is involved in control of translational fidelity.

The protein resides in the plastid. Its subcellular location is the chloroplast. One of the primary rRNA binding proteins, it binds directly to 16S rRNA where it nucleates assembly of the body of the 30S subunit. In terms of biological role, with S5 and S12 plays an important role in translational accuracy. This is Small ribosomal subunit protein uS4c (rps4) from Equisetum laevigatum (Smooth horsetail).